Here is a 255-residue protein sequence, read N- to C-terminus: Pimeloyl-[acyl-carrier protein] methyl ester esterase (255 aa).

Substrate-binding positions include W18, 78–79, and 139–143; these read SL and FLALD. The active-site Nucleophile is the S78. Residues D203 and H233 contribute to the active site. H233 contacts substrate.

This sequence belongs to the AB hydrolase superfamily. Carboxylesterase BioH family. As to quaternary structure, monomer.

The protein resides in the cytoplasm. The catalysed reaction is 6-carboxyhexanoyl-[ACP] methyl ester + H2O = 6-carboxyhexanoyl-[ACP] + methanol + H(+). Its pathway is cofactor biosynthesis; biotin biosynthesis. In terms of biological role, the physiological role of BioH is to remove the methyl group introduced by BioC when the pimeloyl moiety is complete. It allows to synthesize pimeloyl-ACP via the fatty acid synthetic pathway through the hydrolysis of the ester bonds of pimeloyl-ACP esters. The sequence is that of Pimeloyl-[acyl-carrier protein] methyl ester esterase from Xylella fastidiosa (strain M12).